A 1303-amino-acid polypeptide reads, in one-letter code: Latent-transforming growth factor beta-binding protein 3 (1303 aa).

A signal peptide spans 1–43; that stretch reads MPGPRGAAGGLAPEMRGAGAAGLLALLLLLLLLLLGLGGRVEG. N-linked (GlcNAc...) asparagine glycosylation occurs at asparagine 89. Positions 109–141 constitute an EGF-like 1 domain; the sequence is RVVVCPLPCMNGGQCSSRNQCLCPPDFTGRFCQ. Disulfide bonds link cysteine 113–cysteine 123, cysteine 117–cysteine 129, cysteine 131–cysteine 140, cysteine 279–cysteine 303, cysteine 289–cysteine 316, and cysteine 304–cysteine 319. The interval 247–282 is disordered; it reads SSNAESAAPSQHLLPHPKPSHPRPPTQKPLGRCFQD. Residues 277–331 form the TB 1 domain; that stretch reads GRCFQDTLPKQPCGSNPLPGLTKQEDCCGSIGTAWGQSKCHKCPQLQYTGVQKPG. N-linked (GlcNAc...) asparagine glycosylation occurs at asparagine 349. The EGF-like 2; calcium-binding domain occupies 355–395; sequence DINECAMPGVCRHGDCLNNPGSYRCVCPPGHSLGPSRTQCI. Intrachain disulfides connect cysteine 359–cysteine 370, cysteine 365–cysteine 379, cysteine 381–cysteine 394, cysteine 405–cysteine 428, cysteine 415–cysteine 440, cysteine 429–cysteine 443, and cysteine 430–cysteine 455. In terms of domain architecture, TB 2 spans 403-455; that stretch reads SLCFRLVSPEHQCQHPLTTRLTRQLCCCSVGKAWGARCQRCPTDGTAAFKEIC. A disordered region spans residues 478–552; it reads FSLFLHPDGP…ISRPSPPTMR (75 aa). Low complexity predominate over residues 529–540; sequence PTATTTPARPYP. In terms of domain architecture, EGF-like 3 spans 574–615; it reads ETDECRLNQNICGHGECVPGPPDYSCHCNPGYRSHPQHRYCV. Intrachain disulfides connect cysteine 578–cysteine 590, cysteine 585–cysteine 599, cysteine 601–cysteine 614, cysteine 620–cysteine 632, cysteine 625–cysteine 641, cysteine 664–cysteine 676, cysteine 670–cysteine 685, cysteine 687–cysteine 701, cysteine 748–cysteine 759, cysteine 754–cysteine 768, cysteine 770–cysteine 783, cysteine 789–cysteine 800, cysteine 795–cysteine 809, cysteine 811–cysteine 824, cysteine 830–cysteine 841, cysteine 836–cysteine 850, cysteine 852–cysteine 864, cysteine 870–cysteine 883, cysteine 877–cysteine 892, cysteine 894–cysteine 907, cysteine 919–cysteine 942, cysteine 929–cysteine 954, cysteine 943–cysteine 959, cysteine 944–cysteine 971, cysteine 997–cysteine 1010, cysteine 1005–cysteine 1019, cysteine 1021–cysteine 1034, cysteine 1040–cysteine 1051, cysteine 1046–cysteine 1060, cysteine 1062–cysteine 1075, cysteine 1086–cysteine 1097, cysteine 1092–cysteine 1106, cysteine 1108–cysteine 1121, cysteine 1138–cysteine 1162, cysteine 1148–cysteine 1174, cysteine 1163–cysteine 1177, and cysteine 1164–cysteine 1186. Positions 616–659 constitute an EGF-like 4; calcium-binding domain; it reads DVNECEAEPCGPGRGICMNTGGSYNCHCNRGYRLHVGAGGRSCV. Positions 660–702 constitute an EGF-like 5; calcium-binding domain; the sequence is DLNECAKPHLCGDGGFCINFPGHYKCNCYPGYRLKASRPPVCE. Residues 744–784 enclose the EGF-like 6; calcium-binding domain; that stretch reads DVNECAEGSPCSPGWCENLPGSFRCTCAQGYAPAPDGRSCL. Residues 785-825 enclose the EGF-like 7; calcium-binding domain; it reads DVDECEAGDVCDNGICSNTPGSFQCQCLSGYHLSRDRSHCE. Residues 826–865 enclose the EGF-like 8; calcium-binding domain; sequence DIDECDFPAACIGGDCINTNGSYRCLCPQGHRLVGGRKCQ. N-linked (GlcNAc...) asparagine glycosylation occurs at asparagine 845. The 43-residue stretch at 866–908 folds into the EGF-like 9; calcium-binding domain; it reads DIDECSQDPSLCLPHGACKNLQGSYVCVCDEGFTPTQDQHGCE. One can recognise a TB 3 domain in the interval 917–971; the sequence is KECYLNFDDTVFCDSVLATNVTQQECCCSLGAGWGDHCEIYPCPVYSSAEFHSLC. N-linked (GlcNAc...) asparagine glycosylation occurs at asparagine 936. Positions 993 to 1035 constitute an EGF-like 10; calcium-binding domain; it reads DIDECMLFGSEICKEGKCVNTQPGYECYCKQGFYYDGNLLECV. The 41-residue stretch at 1036–1076 folds into the EGF-like 11; calcium-binding domain; that stretch reads DVDECLDESNCRNGVCENTRGGYRCACTPPAEYSPAQRQCL. Residues 1082 to 1122 form the EGF-like 12; calcium-binding domain; that stretch reads DVDECQDPAACRPGRCVNLPGSYRCECRPPWVPGPSGRDCQ. The TB 4 domain maps to 1136-1186; it reads DVCWSQRGEDGMCAGPLAGPALTFDDCCCRQGRGWGAQCRPCPPRGAGSHC. Polar residues predominate over residues 1188 to 1198; it reads TSQSESNSFWD. Residues 1188 to 1219 form a disordered region; sequence TSQSESNSFWDTSPLLLGKPPRDEDSSEEDSD. Residues 1254-1298 form the EGF-like 13; calcium-binding domain; the sequence is DIDECRELNQRGLLCKSERCVNTSGSFRCVCKAGFARSRPHGACV. Cystine bridges form between cysteine 1258/cysteine 1273 and cysteine 1268/cysteine 1282. Asparagine 1275 is a glycosylation site (N-linked (GlcNAc...) asparagine).

It belongs to the LTBP family. As to quaternary structure, forms part of the large latent transforming growth factor beta precursor complex; removal is essential for activation of complex. Interacts with EFEMP2. In terms of processing, contains hydroxylated asparagine residues. Two intrachain disulfide bonds from the TB3 domain are rearranged upon TGFB1 binding, and form interchain bonds with TGFB1 propeptide, anchoring it to the extracellular matrix. As to expression, isoform 2: Expressed prominently in heart, skeletal muscle, prostate, testis, small intestine and ovary. Isoform 1: Strongly expressed in pancreas and liver.

The protein localises to the secreted. The protein resides in the extracellular space. It localises to the extracellular matrix. Its function is as follows. Key regulator of transforming growth factor beta (TGFB1, TGFB2 and TGFB3) that controls TGF-beta activation by maintaining it in a latent state during storage in extracellular space. Associates specifically via disulfide bonds with the Latency-associated peptide (LAP), which is the regulatory chain of TGF-beta, and regulates integrin-dependent activation of TGF-beta. The sequence is that of Latent-transforming growth factor beta-binding protein 3 (LTBP3) from Homo sapiens (Human).